The following is a 715-amino-acid chain: Palmitoyltransferase ZDHHC5 (715 aa).

Residues 1–13 lie on the Cytoplasmic side of the membrane; the sequence is MPAESGKRFKPSK. Residues 14–34 traverse the membrane as a helical segment; that stretch reads YVPVSAAAIFLVGATTLFFAF. Over 35–38 the chain is Extracellular; it reads TCPG. The helical transmembrane segment at 39-59 threads the bilayer; it reads LSLYVSPAVPIYNAIMFLFVL. Over 60–148 the chain is Cytoplasmic; the sequence is ANFSMATFMD…NCIGRRNYRY (89 aa). Position 91 is a phosphotyrosine (Tyr91). Residues 104–154 form the DHHC domain; the sequence is KWCATCRFYRPPRCSHCSVCDNCVEEFDHHCPWVNNCIGRRNYRYFFLFLL. Catalysis depends on Cys134, which acts as the S-palmitoyl cysteine intermediate. The helical transmembrane segment at 149–169 threads the bilayer; that stretch reads FFLFLLSLTAHIMGVFGFGLL. Over 170 to 191 the chain is Extracellular; that stretch reads YVLYHIEELSGVRTAVTMAVMC. Residues 192–212 form a helical membrane-spanning segment; the sequence is VAGLFFIPVAGLTGFHVVLVA. At 213–715 the chain is on the cytoplasmic side; it reads RGRTTNEQVT…VGGTTYEISV (503 aa). The residue at position 247 (Ser247) is a Phosphoserine. The disordered stretch occupies residues 289 to 715; that stretch reads GELRRTKSKG…VGGTTYEISV (427 aa). The residue at position 294 (Thr294) is a Phosphothreonine. Residues Ser296 and Ser299 each carry the phosphoserine modification. Thr303 is subject to Phosphothreonine. Ser345 carries the phosphoserine modification. Residues Thr348 and Thr350 each carry the phosphothreonine modification. Positions 359 to 373 are enriched in low complexity; sequence SSSSTSAAMPHSSSA. 4 positions are modified to phosphoserine: Ser380, Ser398, Ser406, and Ser409. Thr411 carries the phosphothreonine modification. Residues Ser415, Ser425, Ser429, and Ser432 each carry the phosphoserine modification. Over residues 422–432 the composition is skewed to low complexity; that stretch reads SSGSRSSSLKS. Thr436 is subject to Phosphothreonine. Over residues 442–478 the composition is skewed to polar residues; that stretch reads QLQSIRSEGTTSTSYKSLANQTRNGSLSYDSLLTPSD. Phosphoserine is present on residues Ser529 and Ser554. The residue at position 617 (Arg617) is an Omega-N-methylarginine. The residue at position 621 (Ser621) is a Phosphoserine. Thr659 is subject to Phosphothreonine. Polar residues predominate over residues 666–677; sequence LKTTYSKSNGQP. A phosphoserine mark is found at Ser684 and Ser694. An Omega-N-methylarginine modification is found at Arg697.

It belongs to the DHHC palmitoyltransferase family. ERF2/ZDHHC9 subfamily.

The protein resides in the cell membrane. It carries out the reaction L-cysteinyl-[protein] + hexadecanoyl-CoA = S-hexadecanoyl-L-cysteinyl-[protein] + CoA. In terms of biological role, palmitoyltransferase that catalyzes the addition of palmitate onto various protein substrates such as CTNND2, CD36, GSDMD, NLRP3, NOD1, NOD2, STAT3 and S1PR1 thus plays a role in various biological processes including cell adhesion, inflammation, fatty acid uptake, bacterial sensing or cardiac functions. Plays an important role in the regulation of synapse efficacy by mediating palmitoylation of delta-catenin/CTNND2, thereby increasing synaptic delivery and surface stabilization of alpha-amino-3-hydroxy-5-methyl-4-isoxazole propionic acid receptors (AMPARs). Under basal conditions, remains at the synaptic membrane through FYN-mediated phosphorylation that prevents association with endocytic proteins. Neuronal activity enhances the internalization and trafficking of DHHC5 from spines to dendritic shafts where it palmitoylates delta-catenin/CTNND2. Regulates cell adhesion at the plasma membrane by palmitoylating GOLGA7B and DSG2. Plays a role in innate immune response by mediating the palmitoylation of NOD1 and NOD2 and their proper recruitment to the bacterial entry site and phagosomes. Also participates in fatty acid uptake by palmitoylating CD36 and thereby targeting it to the plasma membrane. Upon binding of fatty acids to CD36, gets phosphorylated by LYN leading to inactivation and subsequent CD36 caveolar endocytosis. Controls oligodendrocyte development by catalyzing STAT3 palmitoylation. Acts as a regulator of inflammatory response by mediating palmitoylation of NLRP3 and GSDMD. Palmitoylates NLRP3 to promote inflammasome assembly and activation. Activates pyroptosis by catalyzing palmitoylation of gasdermin-D (GSDMD), thereby promoting membrane translocation and pore formation of GSDMD. This chain is Palmitoyltransferase ZDHHC5 (ZDHHC5), found in Pan troglodytes (Chimpanzee).